Here is a 98-residue protein sequence, read N- to C-terminus: Protein S100-A13 (98 aa).

The EF-hand domain maps to threonine 18 to valine 53. Ca(2+)-binding residues include serine 32, glutamate 37, aspartate 64, asparagine 66, aspartate 68, glutamate 70, and glutamate 75. Phosphoserine is present on serine 32.

The protein belongs to the S-100 family. Homodimer. Part of a copper-dependent multiprotein complex containing S100A13, FGF1 and SYT1. Interacts with FGF1 and SYT1. Interacts with IL1A. As to expression, expressed in heart and skeletal muscle.

It is found in the cytoplasm. The protein localises to the secreted. Plays a role in the export of proteins that lack a signal peptide and are secreted by an alternative pathway. Binds two calcium ions per subunit. Binds one copper ion. Binding of one copper ion does not interfere with calcium binding. Required for the copper-dependent stress-induced export of IL1A and FGF1. The calcium-free protein binds to lipid vesicles containing phosphatidylserine, but not to vesicles containing phosphatidylcholine. This chain is Protein S100-A13 (S100A13), found in Homo sapiens (Human).